Here is a 63-residue protein sequence, read N- to C-terminus: Large ribosomal subunit protein uL29 (63 aa).

This sequence belongs to the universal ribosomal protein uL29 family.

This Colwellia psychrerythraea (strain 34H / ATCC BAA-681) (Vibrio psychroerythus) protein is Large ribosomal subunit protein uL29.